The sequence spans 753 residues: Synaptotagmin-like protein 5 (753 aa).

The RabBD domain maps to 7–123; sequence FINLSFLLDH…IISGEWFLEE (117 aa). The FYVE-type zinc-finger motif lies at 64 to 106; that stretch reads CVHCHKTLGLIFDRGDPCQACSLRVCSECRVTGLDGSWKCTVC. Disordered stretches follow at residues 145–279, 297–359, and 380–404; these read RRSP…SREH, LTKS…LNSL, and LASGLSTNSQAGSDRKRSYLNVPDA. Position 147 is a phosphoserine (S147). Residues 150–174 show a composition bias toward polar residues; sequence SEETQNQEQAQQCVDKSDTLSSVRQ. Basic and acidic residues predominate over residues 195-206; it reads TRGEIRTPKPES. The segment covering 214 to 223 has biased composition (polar residues); it reads LDSQNLQSFK. The segment covering 224–237 has biased composition (low complexity); that stretch reads SASGSDRGSTTSSD. A compositionally biased stretch (polar residues) spans 249–275; sequence KSSYSNGGIPVTQRSPVPSAHSVTSIN. Over residues 380 to 391 the composition is skewed to polar residues; it reads LASGLSTNSQAG. C2 domains lie at 429–550 and 597–717; these read VTGE…DEWF and KRGK…VDWM.

Binds RAB27A that has been activated by GTP-binding.

It localises to the membrane. Its function is as follows. May act as Rab effector protein and play a role in vesicle trafficking. Binds phospholipids. The polypeptide is Synaptotagmin-like protein 5 (Sytl5) (Mus musculus (Mouse)).